The chain runs to 284 residues: 4-hydroxy-3-methylbut-2-enyl diphosphate reductase (284 aa).

C12 is a [4Fe-4S] cluster binding site. Residues H40 and H72 each coordinate (2E)-4-hydroxy-3-methylbut-2-enyl diphosphate. Dimethylallyl diphosphate contacts are provided by H40 and H72. Residues H40 and H72 each coordinate isopentenyl diphosphate. Residue C94 coordinates [4Fe-4S] cluster. H122 is a (2E)-4-hydroxy-3-methylbut-2-enyl diphosphate binding site. Position 122 (H122) interacts with dimethylallyl diphosphate. H122 is an isopentenyl diphosphate binding site. Residue E124 is the Proton donor of the active site. T161 provides a ligand contact to (2E)-4-hydroxy-3-methylbut-2-enyl diphosphate. C193 contacts [4Fe-4S] cluster. S221, N223, and S264 together coordinate (2E)-4-hydroxy-3-methylbut-2-enyl diphosphate. Residues S221, N223, and S264 each contribute to the dimethylallyl diphosphate site. Isopentenyl diphosphate-binding residues include S221, N223, and S264.

The protein belongs to the IspH family. [4Fe-4S] cluster is required as a cofactor.

It carries out the reaction isopentenyl diphosphate + 2 oxidized [2Fe-2S]-[ferredoxin] + H2O = (2E)-4-hydroxy-3-methylbut-2-enyl diphosphate + 2 reduced [2Fe-2S]-[ferredoxin] + 2 H(+). The catalysed reaction is dimethylallyl diphosphate + 2 oxidized [2Fe-2S]-[ferredoxin] + H2O = (2E)-4-hydroxy-3-methylbut-2-enyl diphosphate + 2 reduced [2Fe-2S]-[ferredoxin] + 2 H(+). It functions in the pathway isoprenoid biosynthesis; dimethylallyl diphosphate biosynthesis; dimethylallyl diphosphate from (2E)-4-hydroxy-3-methylbutenyl diphosphate: step 1/1. It participates in isoprenoid biosynthesis; isopentenyl diphosphate biosynthesis via DXP pathway; isopentenyl diphosphate from 1-deoxy-D-xylulose 5-phosphate: step 6/6. Catalyzes the conversion of 1-hydroxy-2-methyl-2-(E)-butenyl 4-diphosphate (HMBPP) into a mixture of isopentenyl diphosphate (IPP) and dimethylallyl diphosphate (DMAPP). Acts in the terminal step of the DOXP/MEP pathway for isoprenoid precursor biosynthesis. This Dehalococcoides mccartyi (strain CBDB1) protein is 4-hydroxy-3-methylbut-2-enyl diphosphate reductase.